Reading from the N-terminus, the 201-residue chain is Phospholipase A2 inhibitor NAI (201 aa).

An N-terminal signal peptide occupies residues 1–19 (MKSLQIICLLFVLVARGSC). Intrachain disulfides connect Cys22-Cys47, Cys25-Cys32, Cys40-Cys68, Cys74-Cys95, Cys96-Cys101, Cys119-Cys144, Cys137-Cys166, and Cys170-Cys191. Asn176 carries an N-linked (GlcNAc...) asparagine glycan.

This sequence belongs to the CNF-like-inhibitor family. Heterotrimer of 2 subunits A and 1 subunit B; non-covalently linked. In terms of processing, N-glycosylated, probably by biantennary structure. Glycosylation does not change PLA2 inhibitory activity. In terms of tissue distribution, expressed by the liver.

The protein localises to the secreted. In terms of biological role, inhibits the enzymatic activity of all phospholipase A2 tested, binding them with micromole to nanomole affinity. The polypeptide is Phospholipase A2 inhibitor NAI (Notechis ater (Black tiger snake)).